The sequence spans 263 residues: Large ribosomal subunit protein uL29m (263 aa).

2 disordered regions span residues 51–92 (ARVT…EELP) and 208–263 (PEID…APRV). The segment covering 53-66 (VTRDNSKQRGESAL) has biased composition (basic and acidic residues). Over residues 214–223 (NPENPYTPST) the composition is skewed to polar residues. Residues 233–245 (GAEASETQSTTTE) are compositionally biased toward low complexity. The segment covering 246–257 (IDPTTIPSSKSQ) has biased composition (polar residues).

This sequence belongs to the universal ribosomal protein uL29 family. In terms of assembly, component of the mitochondrial large ribosomal subunit (mt-LSU). Mature N.crassa 74S mitochondrial ribosomes consist of a small (37S) and a large (54S) subunit. The 37S small subunit contains a 16S ribosomal RNA (16S mt-rRNA) and 32 different proteins. The 54S large subunit contains a 23S rRNA (23S mt-rRNA) and 42 different proteins.

The protein localises to the mitochondrion. Functionally, component of the mitochondrial ribosome (mitoribosome), a dedicated translation machinery responsible for the synthesis of mitochondrial genome-encoded proteins, including at least some of the essential transmembrane subunits of the mitochondrial respiratory chain. The mitoribosomes are attached to the mitochondrial inner membrane and translation products are cotranslationally integrated into the membrane. The protein is Large ribosomal subunit protein uL29m (mrpl4) of Neurospora crassa (strain ATCC 24698 / 74-OR23-1A / CBS 708.71 / DSM 1257 / FGSC 987).